Consider the following 117-residue polypeptide: NADH-ubiquinone oxidoreductase chain 3 (117 aa).

Helical transmembrane passes span 1 to 21 (MLSLTYIVGIASALVIILLLV), 56 to 76 (FFLVAILFLLFDLEIALILPY), and 86 to 106 (TFYNYWLVMLLVVVLTFGLMY).

This sequence belongs to the complex I subunit 3 family.

It is found in the mitochondrion membrane. The catalysed reaction is a ubiquinone + NADH + 5 H(+)(in) = a ubiquinol + NAD(+) + 4 H(+)(out). Functionally, core subunit of the mitochondrial membrane respiratory chain NADH dehydrogenase (Complex I) that is believed to belong to the minimal assembly required for catalysis. Complex I functions in the transfer of electrons from NADH to the respiratory chain. The immediate electron acceptor for the enzyme is believed to be ubiquinone. The protein is NADH-ubiquinone oxidoreductase chain 3 (ND3) of Branchiostoma lanceolatum (Common lancelet).